The sequence spans 118 residues: uncharacterized protein (118 aa).

An HTH hxlR-type domain is found at 6 to 104 (CGFEVTKEVI…WGGYYAEQEY (99 aa)).

This is an uncharacterized protein from Bacillus subtilis (strain 168).